Reading from the N-terminus, the 142-residue chain is Putative pre-16S rRNA nuclease (142 aa).

This sequence belongs to the YqgF nuclease family.

Its subcellular location is the cytoplasm. Could be a nuclease involved in processing of the 5'-end of pre-16S rRNA. This chain is Putative pre-16S rRNA nuclease, found in Chloroflexus aggregans (strain MD-66 / DSM 9485).